Reading from the N-terminus, the 214-residue chain is Adenylate kinase (214 aa).

An ATP-binding site is contributed by 10-15 (GAGKGT). Residues 30–59 (STGDMLRAAIKAGTELGKQAKAVIDAGQLV) form an NMP region. AMP contacts are provided by residues threonine 31, arginine 36, 57–59 (QLV), 85–88 (GFPR), and glutamine 92. Residues 122–159 (GRRAHLPSGRTYHVVYNPPKVEGKDDVTGEDLVVRDDD) are LID. ATP is bound by residues arginine 123 and 132-133 (TY). AMP contacts are provided by arginine 156 and arginine 167. Residue lysine 200 coordinates ATP.

Belongs to the adenylate kinase family. Monomer.

The protein resides in the cytoplasm. It catalyses the reaction AMP + ATP = 2 ADP. The protein operates within purine metabolism; AMP biosynthesis via salvage pathway; AMP from ADP: step 1/1. Its function is as follows. Catalyzes the reversible transfer of the terminal phosphate group between ATP and AMP. Plays an important role in cellular energy homeostasis and in adenine nucleotide metabolism. This chain is Adenylate kinase, found in Vibrio parahaemolyticus serotype O3:K6 (strain RIMD 2210633).